A 190-amino-acid chain; its full sequence is Protein GrpE (190 aa).

A compositionally biased stretch (polar residues) spans 1-18 (MTETPNTSSEEIQTSEPS). The disordered stretch occupies residues 1–21 (MTETPNTSSEEIQTSEPSPDN).

Belongs to the GrpE family. Homodimer.

The protein localises to the cytoplasm. Functionally, participates actively in the response to hyperosmotic and heat shock by preventing the aggregation of stress-denatured proteins, in association with DnaK and GrpE. It is the nucleotide exchange factor for DnaK and may function as a thermosensor. Unfolded proteins bind initially to DnaJ; upon interaction with the DnaJ-bound protein, DnaK hydrolyzes its bound ATP, resulting in the formation of a stable complex. GrpE releases ADP from DnaK; ATP binding to DnaK triggers the release of the substrate protein, thus completing the reaction cycle. Several rounds of ATP-dependent interactions between DnaJ, DnaK and GrpE are required for fully efficient folding. The polypeptide is Protein GrpE (Chlamydia trachomatis serovar A (strain ATCC VR-571B / DSM 19440 / HAR-13)).